Consider the following 574-residue polypeptide: Glycine--tRNA ligase (574 aa).

Substrate-binding residues include Arg-96 and Glu-162. ATP is bound by residues 194-196 (RNE), 204-209 (IRLREF), 327-328 (EC), and 450-453 (GIDR). 209–213 (FTQAE) serves as a coordination point for substrate. 446-450 (EPSYG) lines the substrate pocket.

It belongs to the class-II aminoacyl-tRNA synthetase family.

The protein resides in the cytoplasm. The enzyme catalyses tRNA(Gly) + glycine + ATP = glycyl-tRNA(Gly) + AMP + diphosphate. In terms of biological role, catalyzes the attachment of glycine to tRNA(Gly). The polypeptide is Glycine--tRNA ligase (Methanococcus maripaludis (strain C7 / ATCC BAA-1331)).